The following is a 342-amino-acid chain: Cyclin-dependent kinase-like 4 (342 aa).

The Protein kinase domain maps to 4–286 (YEKLAKIGEG…CAQLLDSAYF (283 aa)). Residues 10–18 (IGEGSYGVV) and K33 contribute to the ATP site. The short motif at 45–51 (RKIALRE) is the [NKR]KIAxRE element. The Proton acceptor role is filled by D126. Positions 295-328 (KRKARSEGRSRRRQQNQLLPLIPGSHISPTPDGR) are disordered.

This sequence belongs to the protein kinase superfamily. CMGC Ser/Thr protein kinase family. CDC2/CDKX subfamily.

It is found in the cytoplasm. It catalyses the reaction L-seryl-[protein] + ATP = O-phospho-L-seryl-[protein] + ADP + H(+). The catalysed reaction is L-threonyl-[protein] + ATP = O-phospho-L-threonyl-[protein] + ADP + H(+). The chain is Cyclin-dependent kinase-like 4 (Cdkl4) from Mus musculus (Mouse).